Here is a 145-residue protein sequence, read N- to C-terminus: Methylglyoxal synthase (145 aa).

The 145-residue stretch at 1 to 145 (MNSKKKIALV…YYQKIRKDNF (145 aa)) folds into the MGS-like domain. Residues His-12, Lys-16, 38-41 (TGTT), and 58-59 (SG) each bind substrate. Asp-64 serves as the catalytic Proton donor/acceptor. His-91 provides a ligand contact to substrate.

Belongs to the methylglyoxal synthase family.

The enzyme catalyses dihydroxyacetone phosphate = methylglyoxal + phosphate. Catalyzes the formation of methylglyoxal from dihydroxyacetone phosphate. The chain is Methylglyoxal synthase from Clostridium acetobutylicum (strain ATCC 824 / DSM 792 / JCM 1419 / IAM 19013 / LMG 5710 / NBRC 13948 / NRRL B-527 / VKM B-1787 / 2291 / W).